Consider the following 775-residue polypeptide: MQSRLMPSGGPGRRWAFLRVPSTPQRRAFASTRFYFQDIFQSQLEDPSSAAVYSSLQASRAVPQTLTEKIVQKYSVGLAKDKFVKSGDYVTISPHRCMTHDNSWPVALKFMSIGATKLHDPKQIVMTLDHDVQNKSEKNLQKYRQIEDFAKHQGVEFYPAGRGIGHQVMVEEGYAWPGTLVVASDSHSNMYGGVGCLGTPIVRTDGASIWATGKTWWQIPPVAKVTLTGVLPPGVTGKDVIVALCGLFDKDDVLNHAIEFTGPEETMRSLSVDARLTIANMTTEWGALSGLFPIDNVLKGWLKGKATTAAMGLAEGPFKTLAPQHFTHPLLEQLFANPLTADKGAKYAKELFLDLSTLSPYVSGPNSVKVATPLKDLEAQNIKVNKAYLVSCTNSRASDIAAAARVFKEAAEKNGGKVPKIADGVEFYVAAASIPEQLAAEEAGDWQALLDAGATPLLPGCAQCIGLGTGLLEAGEVGISASNRNFKGRMGSTDAKAYLGSPEVVAASALTGKLSGPGWYQAPEGLTEVVRGEGDGIREEDRMLTAEQALEKLIGQIDNLVADGEKQFAPEESEESSGDSLTEVYPGFPERVSGEIVFCDADNINTDGIYPGKYTYQDDVSQETMAQVCMSNYDAQFSSIAKEGDILVTGFNFGCGSSREQAATAILAKKIPLVVSGSFGNIFSRNSINNALMGLEVPRLINRLRESFSGEGSDKSLTRRTGWTLTWDVRRSRIEVQEGENGPKWTHQVGELPPNVQEIIAKGGLEKWVKNEIGA.

The transit peptide at 1 to 29 directs the protein to the mitochondrion; that stretch reads MQSRLMPSGGPGRRWAFLRVPSTPQRRAF. 3 residues coordinate [4Fe-4S] cluster: Cys392, Cys461, and Cys464.

It belongs to the aconitase/IPM isomerase family. It depends on [4Fe-4S] cluster as a cofactor.

The protein localises to the mitochondrion. The enzyme catalyses (2R,3S)-homoisocitrate = cis-homoaconitate + H2O. It participates in amino-acid biosynthesis; L-lysine biosynthesis via AAA pathway; L-alpha-aminoadipate from 2-oxoglutarate: step 3/5. Catalyzes the reversible hydration of cis-homoaconitate to (2R,3S)-homoisocitrate, a step in the alpha-aminoadipate pathway for lysine biosynthesis. The polypeptide is Homoaconitase, mitochondrial (lys4) (Aspergillus oryzae (strain ATCC 42149 / RIB 40) (Yellow koji mold)).